The sequence spans 428 residues: Adenylosuccinate synthetase (428 aa).

GTP is bound by residues 12–18 and 40–42; these read GDEGKGK and GHT. D13 (proton acceptor) is an active-site residue. Residues D13 and G40 each contribute to the Mg(2+) site. Residues 13–16, 38–41, T128, R142, Q223, T238, and R302 each bind IMP; these read DEGK and NAGH. H41 (proton donor) is an active-site residue. 298-304 provides a ligand contact to substrate; sequence TTTGRPR. GTP is bound by residues R304, 330–332, and 412–414; these read SID and SVG.

It belongs to the adenylosuccinate synthetase family. As to quaternary structure, homodimer. The cofactor is Mg(2+).

The protein localises to the cytoplasm. The enzyme catalyses IMP + L-aspartate + GTP = N(6)-(1,2-dicarboxyethyl)-AMP + GDP + phosphate + 2 H(+). The protein operates within purine metabolism; AMP biosynthesis via de novo pathway; AMP from IMP: step 1/2. Plays an important role in the de novo pathway of purine nucleotide biosynthesis. Catalyzes the first committed step in the biosynthesis of AMP from IMP. The polypeptide is Adenylosuccinate synthetase (Geobacillus sp. (strain WCH70)).